The following is a 355-amino-acid chain: UDP-N-acetylglucosamine--N-acetylmuramyl-(pentapeptide) pyrophosphoryl-undecaprenol N-acetylglucosamine transferase (355 aa).

Residues 15 to 17 (TGG), asparagine 127, arginine 163, serine 191, isoleucine 244, 263 to 268 (ALTVSE), and glutamine 288 contribute to the UDP-N-acetyl-alpha-D-glucosamine site.

It belongs to the glycosyltransferase 28 family. MurG subfamily.

The protein localises to the cell inner membrane. It carries out the reaction di-trans,octa-cis-undecaprenyl diphospho-N-acetyl-alpha-D-muramoyl-L-alanyl-D-glutamyl-meso-2,6-diaminopimeloyl-D-alanyl-D-alanine + UDP-N-acetyl-alpha-D-glucosamine = di-trans,octa-cis-undecaprenyl diphospho-[N-acetyl-alpha-D-glucosaminyl-(1-&gt;4)]-N-acetyl-alpha-D-muramoyl-L-alanyl-D-glutamyl-meso-2,6-diaminopimeloyl-D-alanyl-D-alanine + UDP + H(+). The protein operates within cell wall biogenesis; peptidoglycan biosynthesis. Cell wall formation. Catalyzes the transfer of a GlcNAc subunit on undecaprenyl-pyrophosphoryl-MurNAc-pentapeptide (lipid intermediate I) to form undecaprenyl-pyrophosphoryl-MurNAc-(pentapeptide)GlcNAc (lipid intermediate II). The chain is UDP-N-acetylglucosamine--N-acetylmuramyl-(pentapeptide) pyrophosphoryl-undecaprenol N-acetylglucosamine transferase from Escherichia coli (strain 55989 / EAEC).